We begin with the raw amino-acid sequence, 128 residues long: Large ribosomal subunit protein bL19 (128 aa).

The protein belongs to the bacterial ribosomal protein bL19 family.

This protein is located at the 30S-50S ribosomal subunit interface and may play a role in the structure and function of the aminoacyl-tRNA binding site. This chain is Large ribosomal subunit protein bL19, found in Aromatoleum aromaticum (strain DSM 19018 / LMG 30748 / EbN1) (Azoarcus sp. (strain EbN1)).